The sequence spans 264 residues: MSNSNIHTTAVIAEGAKLGKNVKIGPYCIIGPEVVLHDNVELKSHVVIEGITEIGENTVIYPFASIGQPPQILKYANERSSTIIGSNNTIREYVTVQAGSQGGGMMTRVGNNNLFMVGVHIGHDCKIGNNVVFANYVSLAGHIGVGDYAIIGGLSAVHQYARIGEYSMIGGLSPVGADVIPFGLVSSKRAVLEGLNLIGMNRKGFDKVKSLSALKAIEEIFSGEGNFAERIKQVAEKYNNNSIVIQIIDFLNQDSSRAFCRFEK.

This sequence belongs to the transferase hexapeptide repeat family. LpxA subfamily. As to quaternary structure, homotrimer.

The protein localises to the cytoplasm. It carries out the reaction a (3R)-hydroxyacyl-[ACP] + UDP-N-acetyl-alpha-D-glucosamine = a UDP-3-O-[(3R)-3-hydroxyacyl]-N-acetyl-alpha-D-glucosamine + holo-[ACP]. It participates in glycolipid biosynthesis; lipid IV(A) biosynthesis; lipid IV(A) from (3R)-3-hydroxytetradecanoyl-[acyl-carrier-protein] and UDP-N-acetyl-alpha-D-glucosamine: step 1/6. Functionally, involved in the biosynthesis of lipid A, a phosphorylated glycolipid that anchors the lipopolysaccharide to the outer membrane of the cell. The sequence is that of Acyl-[acyl-carrier-protein]--UDP-N-acetylglucosamine O-acyltransferase from Rickettsia africae (strain ESF-5).